A 155-amino-acid chain; its full sequence is Probable methanogenesis regulatory protein FilR2 (155 aa).

Residues 18 to 142 (IILLVEDNNA…DLKRTVEEIK (125 aa)) form the Response regulatory domain. D75 bears the 4-aspartylphosphate mark.

Phosphorylated by FilI.

Functionally, member of the two-component regulatory system FilI/FilRs, which is involved in the regulation of methanogenesis. The protein is Probable methanogenesis regulatory protein FilR2 of Methanothrix harundinacea (strain 6Ac) (Methanosaeta harundinacea).